We begin with the raw amino-acid sequence, 348 residues long: MKPTDLAFDTVRAVLWDGTSLKLLDQRRLPRETVYLDIPDVGAAADAIREMVVRGAPAIGITAAYGVVLAARRLPADTPDWLDALTPDLERLAASRPTAVNLFWALARMKSVIGQVGADLPARLEAEARRIHEDDLADNRRMGELGAALMDPAEAVLTHCNTGSLATGGYGTALGVIRSAYGQQRIKKVYADETRPWLQGARLTAWELVQDGIPVDLICEGAAASLMRSGRVGWVVVGADRIAANGDTANKIGTYALAVLARHHGVRFMVVAPTSTIDMDTPDGAGIPIEERPVSEVLGLAGQPVAAEGAGAWNPAFDVTPAELIDAIVTEKGVVERPDRAKMTALMK.

Residues 54 to 56 (RGA), Arg96, and Gln199 contribute to the substrate site. The active-site Proton donor is Asp240. 250 to 251 (NK) contacts substrate.

This sequence belongs to the eIF-2B alpha/beta/delta subunits family. MtnA subfamily.

It carries out the reaction 5-(methylsulfanyl)-alpha-D-ribose 1-phosphate = 5-(methylsulfanyl)-D-ribulose 1-phosphate. It functions in the pathway amino-acid biosynthesis; L-methionine biosynthesis via salvage pathway; L-methionine from S-methyl-5-thio-alpha-D-ribose 1-phosphate: step 1/6. Functionally, catalyzes the interconversion of methylthioribose-1-phosphate (MTR-1-P) into methylthioribulose-1-phosphate (MTRu-1-P). The protein is Methylthioribose-1-phosphate isomerase of Thioalkalivibrio sulfidiphilus (strain HL-EbGR7).